Here is a 211-residue protein sequence, read N- to C-terminus: Uracil phosphoribosyltransferase (211 aa).

5-phospho-alpha-D-ribose 1-diphosphate-binding positions include Arg-81, Arg-106, and Asp-133–Ser-141. Uracil is bound by residues Ile-196 and Gly-201–Ala-203. Asp-202 contacts 5-phospho-alpha-D-ribose 1-diphosphate.

This sequence belongs to the UPRTase family. Mg(2+) serves as cofactor.

The catalysed reaction is UMP + diphosphate = 5-phospho-alpha-D-ribose 1-diphosphate + uracil. The protein operates within pyrimidine metabolism; UMP biosynthesis via salvage pathway; UMP from uracil: step 1/1. With respect to regulation, allosterically activated by GTP. In terms of biological role, catalyzes the conversion of uracil and 5-phospho-alpha-D-ribose 1-diphosphate (PRPP) to UMP and diphosphate. The sequence is that of Uracil phosphoribosyltransferase from Paracoccus denitrificans (strain Pd 1222).